An 87-amino-acid polypeptide reads, in one-letter code: Acyl-CoA-binding protein (87 aa).

Positions 3-87 (LKEEFEEHAV…KVKQLLEESA (85 aa)) constitute an ACB domain. Residues 30 to 34 (YGLYK), K56, and Y75 each bind an acyl-CoA.

This sequence belongs to the ACBP family.

Binds medium- and long-chain acyl-CoA esters with very high affinity and may function as an intracellular carrier of acyl-CoA esters. This chain is Acyl-CoA-binding protein (ACABP), found in Fritillaria agrestis (Stinkbells).